The following is a 938-amino-acid chain: Ankyrin repeat and LEM domain-containing protein 2 (938 aa).

Topologically, residues 1-12 (MLWPRLAAAEWA) are lumenal. The helical; Signal-anchor for type III membrane protein transmembrane segment at 13-32 (ALAWELLGASVLLIAVRWLV) threads the bilayer. Residues 33-938 (RRLGPRPGGL…MARLAELAAL (906 aa)) are Cytoplasmic-facing. One can recognise an LEM domain in the interval 69–113 (LARLKLLNPDDLREEIVKAGLKCGPITSTTRFIFEKKLAQALLEQ). Serine 259 and serine 268 each carry phosphoserine. An ANK repeat occupies 411 to 440 (GYDTPLHFACKFGNADVVNVLSSHHLIVKN). Phosphoserine is present on residues serine 488, serine 496, serine 512, and serine 528. Basic and acidic residues predominate over residues 609–627 (GKKAQQETGEREASCRDKA). The interval 609-636 (GKKAQQETGEREASCRDKATTSGSNSIS) is disordered. A phosphoserine mark is found at serine 662, serine 804, serine 896, and serine 914. The tract at residues 870-924 (RQSWPSPAVKGRFKSQLPDLSGPHSYSPGRNSVAGSNPAKPGLGSPGRYSPVHGS) is disordered.

This sequence belongs to the ANKLE2 family. Interacts with BAF/BANF1. Interacts with protein phosphatase 2A (PP2A) components PPP2C (PPP2CA or PPP2CB) and PPP2R1A. In terms of assembly, (Microbial infection) May interact with non-structural protein 4A/NS4A from Zika virus strains Mr-766 or French Polynesia 10087PF/2013; the interaction may inhibit ANKLE2 function and contribute to defects in brain development, such as microcephaly.

Its subcellular location is the endoplasmic reticulum membrane. Involved in mitotic nuclear envelope reassembly by promoting dephosphorylation of BAF/BANF1 during mitotic exit. Coordinates the control of BAF/BANF1 dephosphorylation by inhibiting VRK1 kinase and promoting dephosphorylation of BAF/BANF1 by protein phosphatase 2A (PP2A), thereby facilitating nuclear envelope assembly. May regulate nuclear localization of VRK1 in non-dividing cells. It is unclear whether it acts as a real PP2A regulatory subunit or whether it is involved in recruitment of the PP2A complex. Involved in brain development. The polypeptide is Ankyrin repeat and LEM domain-containing protein 2 (ANKLE2) (Homo sapiens (Human)).